Consider the following 71-residue polypeptide: Conotoxin Lt11.3 (71 aa).

A signal peptide spans 1-26; it reads MMFRLTSVGCILLVIAFLNLVGLTNA. 4 disulfides stabilise this stretch: Cys27–Cys41, Cys34–Cys46, Cys40–Cys50, and Cys45–Cys54. Pro57 carries the proline amide modification. The propeptide occupies 61-71; it reads TRLQGFFKHRR.

The protein belongs to the conotoxin I2 superfamily. Expressed by the venom duct.

Its subcellular location is the secreted. Functionally, probable neurotoxin. The chain is Conotoxin Lt11.3 from Conus litteratus (Lettered cone).